Consider the following 121-residue polypeptide: Small ribosomal subunit protein uS13 (121 aa).

Positions 95–121 (LPVRGQNTKNNARTRKGKAVAIAGKKK) are disordered. Residues 106-121 (ARTRKGKAVAIAGKKK) show a composition bias toward basic residues.

The protein belongs to the universal ribosomal protein uS13 family. In terms of assembly, part of the 30S ribosomal subunit. Forms a loose heterodimer with protein S19. Forms two bridges to the 50S subunit in the 70S ribosome.

Located at the top of the head of the 30S subunit, it contacts several helices of the 16S rRNA. In the 70S ribosome it contacts the 23S rRNA (bridge B1a) and protein L5 of the 50S subunit (bridge B1b), connecting the 2 subunits; these bridges are implicated in subunit movement. Contacts the tRNAs in the A and P-sites. This is Small ribosomal subunit protein uS13 from Streptococcus thermophilus (strain CNRZ 1066).